A 340-amino-acid polypeptide reads, in one-letter code: NADH-quinone oxidoreductase subunit H (340 aa).

A run of 8 helical transmembrane segments spans residues 4 to 24, 78 to 98, 113 to 133, 151 to 171, 184 to 204, 244 to 264, 273 to 293, and 316 to 336; these read TIGILIWIIIKIIVIVVPLLI, YLFVIAPLFALVPSLVGWAVI, VLYLFAMSSLGVYGVLIAGWA, VSYEIAMGFALVGVLLAAGSM, MLHWWFIPLLPLFLVFWISGI, SMILISTVLAILFMGGWLSPF, IFFIVPGFVWLLLKISFFLFV, and VLIPVTIVWLIVTAVMVVAHV.

The protein belongs to the complex I subunit 1 family. As to quaternary structure, NDH-1 is composed of 14 different subunits. Subunits NuoA, H, J, K, L, M, N constitute the membrane sector of the complex.

The protein resides in the cell inner membrane. It carries out the reaction a quinone + NADH + 5 H(+)(in) = a quinol + NAD(+) + 4 H(+)(out). NDH-1 shuttles electrons from NADH, via FMN and iron-sulfur (Fe-S) centers, to quinones in the respiratory chain. The immediate electron acceptor for the enzyme in this species is believed to be ubiquinone. Couples the redox reaction to proton translocation (for every two electrons transferred, four hydrogen ions are translocated across the cytoplasmic membrane), and thus conserves the redox energy in a proton gradient. This subunit may bind ubiquinone. This chain is NADH-quinone oxidoreductase subunit H, found in Legionella pneumophila (strain Lens).